Here is a 237-residue protein sequence, read N- to C-terminus: Phosphoadenosine 5'-phosphosulfate reductase (237 aa).

C231 (nucleophile; cysteine thiosulfonate intermediate) is an active-site residue.

Belongs to the PAPS reductase family. CysH subfamily.

Its subcellular location is the cytoplasm. The enzyme catalyses [thioredoxin]-disulfide + sulfite + adenosine 3',5'-bisphosphate + 2 H(+) = [thioredoxin]-dithiol + 3'-phosphoadenylyl sulfate. Its pathway is sulfur metabolism; hydrogen sulfide biosynthesis; sulfite from sulfate: step 3/3. Catalyzes the formation of sulfite from phosphoadenosine 5'-phosphosulfate (PAPS) using thioredoxin as an electron donor. This chain is Phosphoadenosine 5'-phosphosulfate reductase, found in Xylella fastidiosa (strain M23).